The chain runs to 309 residues: Ribose-phosphate pyrophosphokinase (309 aa).

ATP is bound by residues 37-39 (DGE) and 96-97 (RQ). Mg(2+) contacts are provided by histidine 130 and aspartate 169. Lysine 192 is an active-site residue. D-ribose 5-phosphate is bound by residues arginine 194, aspartate 218, and 222–226 (DTAGT).

It belongs to the ribose-phosphate pyrophosphokinase family. Class I subfamily. As to quaternary structure, homohexamer. Requires Mg(2+) as cofactor.

The protein localises to the cytoplasm. It carries out the reaction D-ribose 5-phosphate + ATP = 5-phospho-alpha-D-ribose 1-diphosphate + AMP + H(+). It functions in the pathway metabolic intermediate biosynthesis; 5-phospho-alpha-D-ribose 1-diphosphate biosynthesis; 5-phospho-alpha-D-ribose 1-diphosphate from D-ribose 5-phosphate (route I): step 1/1. Functionally, involved in the biosynthesis of the central metabolite phospho-alpha-D-ribosyl-1-pyrophosphate (PRPP) via the transfer of pyrophosphoryl group from ATP to 1-hydroxyl of ribose-5-phosphate (Rib-5-P). This chain is Ribose-phosphate pyrophosphokinase, found in Wolinella succinogenes (strain ATCC 29543 / DSM 1740 / CCUG 13145 / JCM 31913 / LMG 7466 / NCTC 11488 / FDC 602W) (Vibrio succinogenes).